The sequence spans 123 residues: Small ribosomal subunit protein uS12 (123 aa).

Positions 1-30 (MPTIQQLIRKPRQPKIKRSKSQHMEGCPQK) are disordered. Residues 9–21 (RKPRQPKIKRSKS) are compositionally biased toward basic residues. Asp89 carries the post-translational modification 3-methylthioaspartic acid. The interval 104 to 123 (TQGVKDRRQRRSKYGAKRPK) is disordered. Over residues 110–123 (RRQRRSKYGAKRPK) the composition is skewed to basic residues.

This sequence belongs to the universal ribosomal protein uS12 family. As to quaternary structure, part of the 30S ribosomal subunit. Contacts proteins S8 and S17. May interact with IF1 in the 30S initiation complex.

With S4 and S5 plays an important role in translational accuracy. Its function is as follows. Interacts with and stabilizes bases of the 16S rRNA that are involved in tRNA selection in the A site and with the mRNA backbone. Located at the interface of the 30S and 50S subunits, it traverses the body of the 30S subunit contacting proteins on the other side and probably holding the rRNA structure together. The combined cluster of proteins S8, S12 and S17 appears to hold together the shoulder and platform of the 30S subunit. The polypeptide is Small ribosomal subunit protein uS12 (Jannaschia sp. (strain CCS1)).